A 276-amino-acid polypeptide reads, in one-letter code: NH(3)-dependent NAD(+) synthetase (276 aa).

G43–S50 serves as a coordination point for ATP. D49 contributes to the Mg(2+) binding site. R146 is a deamido-NAD(+) binding site. ATP is bound at residue T166. Position 171 (E171) interacts with Mg(2+). K179 and D186 together coordinate deamido-NAD(+). K195 and T217 together coordinate ATP. H266–K267 provides a ligand contact to deamido-NAD(+).

The protein belongs to the NAD synthetase family. Homodimer.

It carries out the reaction deamido-NAD(+) + NH4(+) + ATP = AMP + diphosphate + NAD(+) + H(+). It participates in cofactor biosynthesis; NAD(+) biosynthesis; NAD(+) from deamido-NAD(+) (ammonia route): step 1/1. Functionally, catalyzes the ATP-dependent amidation of deamido-NAD to form NAD. Uses ammonia as a nitrogen source. The protein is NH(3)-dependent NAD(+) synthetase of Vibrio atlanticus (strain LGP32) (Vibrio splendidus (strain Mel32)).